A 452-amino-acid chain; its full sequence is Probable intron-encoded endonuclease 2 (452 aa).

Transmembrane regions (helical) follow at residues 1-21 (MNIT…NRKN), 22-42 (IILM…LILV), and 57-77 (IYII…LVAF). A ndh-4L exon 1 encoded region spans residues 1–80 (MNITLILFLI…LAILVAFYRL (80 aa)). A ndh-4L intron 1 encoded region spans residues 81-452 (INSPVKNPRS…SLEGGMNKNI (372 aa)).

In the N-terminal section; belongs to the complex I subunit 4L family. The protein in the C-terminal section; belongs to the LAGLIDADG endonuclease family.

It localises to the mitochondrion membrane. In terms of biological role, mitochondrial DNA endonuclease involved in intron homing. The polypeptide is Probable intron-encoded endonuclease 2 (Neurospora crassa (strain ATCC 24698 / 74-OR23-1A / CBS 708.71 / DSM 1257 / FGSC 987)).